The chain runs to 221 residues: Epididymal secretory glutathione peroxidase (221 aa).

The signal sequence occupies residues 1–21 (MVTELRVFYLVPLLLASYVQT). Residue cysteine 73 is part of the active site.

The protein belongs to the glutathione peroxidase family. As to expression, epididymis.

The protein localises to the secreted. It carries out the reaction 2 glutathione + H2O2 = glutathione disulfide + 2 H2O. In terms of biological role, protects cells and enzymes from oxidative damage, by catalyzing the reduction of hydrogen peroxide, lipid peroxides and organic hydroperoxide, by glutathione. May constitute a glutathione peroxidase-like protective system against peroxide damage in sperm membrane lipids. In Mus musculus (Mouse), this protein is Epididymal secretory glutathione peroxidase (Gpx5).